The chain runs to 151 residues: MEQPPPADQPQQPPPPTLTNPRFTLELEFVSSLANPYYLSHLAVTYPNLLGINKSGDDSDVNNDSTDPDAQGFAAYLAYLYSYWKTPEYAQFLTHPGATLRALRLLQEETFRRDIIRPDVIERLAGTDIAAEPVDPAAESGDQEGEQAKAS.

Over residues 1–18 the composition is skewed to pro residues; that stretch reads MEQPPPADQPQQPPPPTL. Disordered stretches follow at residues 1–20 and 131–151; these read MEQPPPADQPQQPPPPTLTN and AEPVDPAAESGDQEGEQAKAS.

Belongs to the Mediator complex subunit 31 family. As to quaternary structure, component of the Mediator complex.

It localises to the nucleus. Its function is as follows. Component of the Mediator complex, a coactivator involved in the regulated transcription of nearly all RNA polymerase II-dependent genes. Mediator functions as a bridge to convey information from gene-specific regulatory proteins to the basal RNA polymerase II transcription machinery. Mediator is recruited to promoters by direct interactions with regulatory proteins and serves as a scaffold for the assembly of a functional preinitiation complex with RNA polymerase II and the general transcription factors. The polypeptide is Mediator of RNA polymerase II transcription subunit 31 (soh1) (Aspergillus niger (strain ATCC MYA-4892 / CBS 513.88 / FGSC A1513)).